Reading from the N-terminus, the 517-residue chain is Aldehyde dehydrogenase X, mitochondrial (517 aa).

A mitochondrion-targeting transit peptide spans 1–17 (MLRFLAPRLLSLQGRTA). Lys51 carries the post-translational modification N6-acetyllysine. Lys52 is modified (N6-acetyllysine; alternate). N6-succinyllysine; alternate is present on Lys52. Residue Lys81 is modified to N6-succinyllysine. Position 262 to 267 (262 to 267 (GSTEVG)) interacts with NAD(+). Residue Glu285 is the Proton acceptor of the active site. Cys319 acts as the Nucleophile in catalysis. Residues Lys364, Lys383, Lys399, Lys414, and Lys426 each carry the N6-acetyllysine; alternate modification. Residues Lys364, Lys383, Lys399, Lys414, and Lys426 each carry the N6-succinyllysine; alternate modification. Lys429 bears the N6-acetyllysine mark.

The protein belongs to the aldehyde dehydrogenase family. As to quaternary structure, homotetramer. As to expression, liver, testis and to a lesser extent in brain.

The protein localises to the mitochondrion matrix. The catalysed reaction is an aldehyde + NAD(+) + H2O = a carboxylate + NADH + 2 H(+). Its pathway is alcohol metabolism; ethanol degradation; acetate from ethanol: step 2/2. Its function is as follows. ALDHs play a major role in the detoxification of alcohol-derived acetaldehyde. They are involved in the metabolism of corticosteroids, biogenic amines, neurotransmitters, and lipid peroxidation. The chain is Aldehyde dehydrogenase X, mitochondrial (ALDH1B1) from Homo sapiens (Human).